A 524-amino-acid chain; its full sequence is Probable glycine dehydrogenase (decarboxylating) subunit 2 (524 aa).

An N6-(pyridoxal phosphate)lysine modification is found at Lys-296.

Belongs to the GcvP family. C-terminal subunit subfamily. As to quaternary structure, the glycine cleavage system is composed of four proteins: P, T, L and H. In this organism, the P 'protein' is a heterodimer of two subunits. The cofactor is pyridoxal 5'-phosphate.

The enzyme catalyses N(6)-[(R)-lipoyl]-L-lysyl-[glycine-cleavage complex H protein] + glycine + H(+) = N(6)-[(R)-S(8)-aminomethyldihydrolipoyl]-L-lysyl-[glycine-cleavage complex H protein] + CO2. Its function is as follows. The glycine cleavage system catalyzes the degradation of glycine. The P protein binds the alpha-amino group of glycine through its pyridoxal phosphate cofactor; CO(2) is released and the remaining methylamine moiety is then transferred to the lipoamide cofactor of the H protein. The sequence is that of Probable glycine dehydrogenase (decarboxylating) subunit 2 from Caulobacter vibrioides (strain ATCC 19089 / CIP 103742 / CB 15) (Caulobacter crescentus).